Here is a 212-residue protein sequence, read N- to C-terminus: Prolactin (212 aa).

The N-terminal stretch at 1–24 is a signal peptide; the sequence is MAQRKTNGSKLFMMVLYMVAACSA. 2 disulfide bridges follow: Cys-70–Cys-185 and Cys-202–Cys-212.

It belongs to the somatotropin/prolactin family. Pituitary gland.

It localises to the secreted. The protein is Prolactin (prl) of Dicentrarchus labrax (European seabass).